We begin with the raw amino-acid sequence, 176 residues long: MKVLLCLVCSFYIIVSSITTMTTGTPSMPAINRQTLYLAAYSSKLFSWNVGCVKTRHLSQEGDWVTRSLIYVFTFDKKPWETKADAFKVKWEPYSPLLRVQASDYVKYNLRAKPEYFIRTYDDDFLLLSDVKESRSPCSLWVTLKYVERIPETINRTFYANCPDPVTVPFDERCYP.

The N-terminal stretch at 1 to 24 is a signal peptide; it reads MKVLLCLVCSFYIIVSSITTMTTG. Cystine bridges form between Cys-52-Cys-174 and Cys-138-Cys-162. An N-linked (GlcNAc...) asparagine glycan is attached at Asn-155.

It belongs to the calycin superfamily. Lipocalin family. In terms of assembly, homodimer; non-disulfide-linked. Each monomer accommodates one molecule of cholesterol in a pocket. Expressed in salivary glands.

The protein resides in the secreted. Its function is as follows. Salivary tick protein that modulates host immune response. This protein blocks dendritic cell (DC) differentiation from monocytes. In addition, it inhibits up-regulation of costimulatory molecules and pro-inflammatory cytokines in response to stimuli and promotes up-regulation of co-inhibitory molecules and the anti-inflammatory cytokine interleukin-10. It has a pocket to accomodate cholesterol, which may have immune-modulatory roles, either directly or through interactions with the host gut microbiota. This Rhipicephalus sanguineus (Brown dog tick) protein is Japanin-like-RS.